Reading from the N-terminus, the 402-residue chain is CCA-adding enzyme (402 aa).

ATP is bound by residues Gly32 and Arg35. Residues Gly32 and Arg35 each contribute to the CTP site. Mg(2+) is bound by residues Asp45 and Asp47. 5 residues coordinate ATP: Arg116, Asp159, Arg162, Arg165, and Arg168. CTP is bound by residues Arg116, Asp159, Arg162, Arg165, and Arg168.

This sequence belongs to the tRNA nucleotidyltransferase/poly(A) polymerase family. Bacterial CCA-adding enzyme type 3 subfamily. Homodimer. Requires Mg(2+) as cofactor.

The catalysed reaction is a tRNA precursor + 2 CTP + ATP = a tRNA with a 3' CCA end + 3 diphosphate. It carries out the reaction a tRNA with a 3' CCA end + 2 CTP + ATP = a tRNA with a 3' CCACCA end + 3 diphosphate. Catalyzes the addition and repair of the essential 3'-terminal CCA sequence in tRNAs without using a nucleic acid template. Adds these three nucleotides in the order of C, C, and A to the tRNA nucleotide-73, using CTP and ATP as substrates and producing inorganic pyrophosphate. tRNA 3'-terminal CCA addition is required both for tRNA processing and repair. Also involved in tRNA surveillance by mediating tandem CCA addition to generate a CCACCA at the 3' terminus of unstable tRNAs. While stable tRNAs receive only 3'-terminal CCA, unstable tRNAs are marked with CCACCA and rapidly degraded. The polypeptide is CCA-adding enzyme (Streptococcus thermophilus (strain CNRZ 1066)).